The following is a 184-amino-acid chain: uncharacterized protein (184 aa).

This is an uncharacterized protein from Haemophilus influenzae (strain ATCC 51907 / DSM 11121 / KW20 / Rd).